A 225-amino-acid chain; its full sequence is GTP cyclohydrolase 1 (225 aa).

Residues 1–12 (MERSKQSHDNQA) show a composition bias toward basic and acidic residues. The disordered stretch occupies residues 1–59 (MERSKQSHDNQADSRPTTNESSLNGHFDGLVKKTPGMWDVKGRGTAGESSSHTGSSVVE). Polar residues-rich tracts occupy residues 13–24 (DSRPTTNESSLN) and 47–58 (GESSSHTGSSVV). Zn(2+)-binding residues include Cys149, His152, and Cys220.

This sequence belongs to the GTP cyclohydrolase I family. As to quaternary structure, toroid-shaped homodecamer, composed of two pentamers of five dimers.

It localises to the cytoplasm. The protein resides in the nucleus. The catalysed reaction is GTP + H2O = 7,8-dihydroneopterin 3'-triphosphate + formate + H(+). It functions in the pathway cofactor biosynthesis; 7,8-dihydroneopterin triphosphate biosynthesis; 7,8-dihydroneopterin triphosphate from GTP: step 1/1. With respect to regulation, GTP shows a positive allosteric effect, and tetrahydrobiopterin inhibits the enzyme activity. Zinc is required for catalytic activity. Inhibited by Mg(2+). May positively regulate nitric oxide synthesis in endothelial cells. May be involved in dopamine synthesis. May modify pain sensitivity and persistence. The sequence is that of GTP cyclohydrolase 1 (gch1) from Oncorhynchus mykiss (Rainbow trout).